Consider the following 107-residue polypeptide: Thioredoxin (107 aa).

The Thioredoxin domain maps to 2-107; the sequence is PSPIQVTDFS…TLTNALKKYL (106 aa). Residues Cys32 and Cys35 each act as nucleophile in the active site. Cys32 and Cys35 are joined by a disulfide.

It belongs to the thioredoxin family.

Its subcellular location is the plastid. It is found in the chloroplast. Functionally, participates in various redox reactions through the reversible oxidation of its active center dithiol to a disulfide and catalyzes dithiol-disulfide exchange reactions. This Cyanidium caldarium (Red alga) protein is Thioredoxin (trxA).